We begin with the raw amino-acid sequence, 168 residues long: Small ribosomal subunit protein uS5 (168 aa).

The S5 DRBM domain maps to 13–76; the sequence is IQEKLVAVRR…ENARRNMISV (64 aa).

This sequence belongs to the universal ribosomal protein uS5 family. Part of the 30S ribosomal subunit. Contacts proteins S4 and S8.

Functionally, with S4 and S12 plays an important role in translational accuracy. In terms of biological role, located at the back of the 30S subunit body where it stabilizes the conformation of the head with respect to the body. This Coxiella burnetii (strain RSA 493 / Nine Mile phase I) protein is Small ribosomal subunit protein uS5.